The chain runs to 358 residues: Neutral protease 2 homolog MEP8 (358 aa).

The signal sequence occupies residues 1–19 (MKLSSILLALAALVSPAFS). The propeptide occupies 20–179 (YAISHLPRSE…EKAIKPVDKR (160 aa)). Cystine bridges form between Cys-186–Cys-256 and Cys-263–Cys-281. His-305 is a binding site for Zn(2+). Glu-306 is a catalytic residue. Residues His-309 and Asp-320 each coordinate Zn(2+).

The protein belongs to the peptidase M35 family. Requires Zn(2+) as cofactor.

It is found in the secreted. It carries out the reaction Preferential cleavage of bonds with hydrophobic residues in P1'. Also 3-Asn-|-Gln-4 and 8-Gly-|-Ser-9 bonds in insulin B chain.. Functionally, secreted metalloproteinase that allows assimilation of proteinaceous substrates. Shows high activities on basic nuclear substrates such as histone and protamine. May be involved in virulence. This Coccidioides posadasii (strain C735) (Valley fever fungus) protein is Neutral protease 2 homolog MEP8 (MEP8).